The following is a 494-amino-acid chain: MFS-type transporter lnaF (494 aa).

The disordered stretch occupies residues 1–51; sequence MTYDPENAMGEARADAPVEAEKEHEATQTTVKESTLGYDNSSDPSRRDSYR. Positions 12–26 are enriched in basic and acidic residues; sequence ARADAPVEAEKEHEA. 3 N-linked (GlcNAc...) asparagine glycosylation sites follow: Asn-40, Asn-58, and Asn-68. 10 helical membrane passes run 105 to 125, 128 to 148, 156 to 176, 203 to 223, 228 to 248, 290 to 310, 323 to 343, 354 to 374, 383 to 403, and 446 to 466; these read SLLI…DMFS, AGLL…TLAL, MLWY…GEYP, TLMA…CLIA, LPVT…IIMV, LAFF…STII, AIWQ…GAWL, ILGF…FPHL, VLYG…IGLI, and STFY…WFLP.

The protein belongs to the major facilitator superfamily. Sugar transporter (TC 2.A.1.1) family.

Its subcellular location is the cell membrane. Its function is as follows. MFS-type transporter; part of the lna gene cluster that mediates the biosynthesis of diastereomeric piperazines. Lna and lnb clusters encode sets of enzymes that produce overlapping sets of previously undescribed metabolites such as piperazinomycin-like metabolites or morpholine. The lna and lnb biosynthetic pathways appear to be part of a signaling network that controls the formation of sclerotia, a resilient overwintering structure. May be involved in the secretion of the metabolites produced by the lna and lnb clusters. This is MFS-type transporter lnaF from Aspergillus flavus (strain ATCC 200026 / FGSC A1120 / IAM 13836 / NRRL 3357 / JCM 12722 / SRRC 167).